We begin with the raw amino-acid sequence, 364 residues long: Photoreceptor outer segment membrane glycoprotein 2 (364 aa).

Residues 1 to 24 are Cytoplasmic-facing; it reads MTVLKVKFTKTKRDKLAQILWILN. The chain crosses the membrane as a helical span at residues 25-43; the sequence is WVSVVSGIILFSLGLFLKI. Over 44 to 61 the chain is Lumenal; it reads EIKKRNEVMAKGDINSVP. A helical membrane pass occupies residues 62-80; it reads NMLISVGVIACVVNFLGGK. Residues 81–99 lie on the Cytoplasmic side of the membrane; it reads ICYDCSDANKFSRWKLIML. A helical transmembrane segment spans residues 100–123; the sequence is PYIICTFCFTFCILLGALMCYTMR. Topologically, residues 124–264 are lumenal; that stretch reads NELEESLYLG…LEYYTAIMRS (141 aa). Asparagine 229 carries N-linked (GlcNAc...) asparagine glycosylation. The helical transmembrane segment at 265-290 threads the bilayer; that stretch reads IGIAALLIWLFELSVLIGVRYLQTAM. Topologically, residues 291-364 are cytoplasmic; sequence KNVLLQGDLQ…VTAKSIPAAS (74 aa).

Belongs to the PRPH2/ROM1 family.

The protein localises to the membrane. In Gallus gallus (Chicken), this protein is Photoreceptor outer segment membrane glycoprotein 2.